Here is a 66-residue protein sequence, read N- to C-terminus: DNA-directed RNA polymerase subunit omega (66 aa).

This sequence belongs to the RNA polymerase subunit omega family. In terms of assembly, the RNAP catalytic core consists of 2 alpha, 1 beta, 1 beta' and 1 omega subunit. When a sigma factor is associated with the core the holoenzyme is formed, which can initiate transcription.

The enzyme catalyses RNA(n) + a ribonucleoside 5'-triphosphate = RNA(n+1) + diphosphate. Promotes RNA polymerase assembly. Latches the N- and C-terminal regions of the beta' subunit thereby facilitating its interaction with the beta and alpha subunits. This chain is DNA-directed RNA polymerase subunit omega, found in Clostridium botulinum (strain Alaska E43 / Type E3).